The sequence spans 462 residues: Notoamide biosynthesis cluster protein O' (462 aa).

3 helical membrane-spanning segments follow: residues 16 to 36 (IFNVSVVAVCAFIAPGLWAAM), 55 to 75 (AVIFCLQVVVCVFGSSLIAKI), and 79 to 99 (WAFALGMVGFPIYASSVYCNV). N102 carries N-linked (GlcNAc...) asparagine glycosylation. 4 helical membrane-spanning segments follow: residues 104–124 (SWYIMLACVIDGICSGIFWLT), 143–163 (AYWLASRIMGQMIGGAVTLGV), 173–193 (ISVQTYLVFISIQAIGPFVAA), and 233–253 (ILLLLPMMFQSVFSEAFFSTY). N254 carries N-linked (GlcNAc...) asparagine glycosylation. A run of 4 helical transmembrane segments spans residues 265–285 (LSSLVASTCVIISNFLLGFFL), 297–317 (MAAFIIIYAFELSLYVYAMVV), 343–363 (VYILMLVGFNLMYDYLYWLIG), and 404–424 (AVAVNLSFFAACIVPSAFVIY). The segment at 443–462 (LQTSGEGSHDIMDANGKSDD) is disordered. The span at 449–462 (GSHDIMDANGKSDD) shows a compositional bias: basic and acidic residues.

It belongs to the unc-93 family.

Its subcellular location is the membrane. Its function is as follows. Part of the gene cluster that mediates the biosynthesis of notoamide, a fungal indole alkaloid that belongs to a family of natural products containing a characteristic bicyclo[2.2.2]diazaoctane core. The first step of notoamide biosynthesis involves coupling of L-proline and L-tryptophan by the bimodular NRPS notE', to produce cyclo-L-tryptophan-L-proline called brevianamide F. The reverse prenyltransferase notF' then acts as a deoxybrevianamide E synthase and converts brevianamide F to deoxybrevianamide E via reverse prenylation at C-2 of the indole ring leading to the bicyclo[2.2.2]diazaoctane core. Deoxybrevianamide E is further hydroxylated at C-6 of the indole ring, likely catalyzed by the cytochrome P450 monooxygenase notG', to yield 6-hydroxy-deoxybrevianamide E. 6-hydroxy-deoxybrevianamide E is a specific substrate of the prenyltransferase notC' for normal prenylation at C-7 to produce 6-hydroxy-7-prenyl-deoxybrevianamide, also called notoamide S. As the proposed pivotal branching point in notoamide biosynthesis, notoamide S can be diverted to notoamide E through an oxidative pyran ring closure putatively catalyzed by either notH' cytochrome P450 monooxygenase or the notD' FAD-linked oxidoreductase. This step would be followed by an indole 2,3-epoxidation-initiated pinacol-like rearrangement catalyzed by the notB' FAD-dependent monooxygenase leading to the formation of notoamide C and notoamide D. On the other hand notoamide S is converted to notoamide T by notH' (or notD'), a bifunctional oxidase that also functions as the intramolecular Diels-Alderase responsible for generation of (-)-notoamide T. To generate antipodal (+)-notoaminide T, notH (or notD) in Aspergillus strain MF297-2 is expected to catalyze a Diels-Alder reaction leading to the opposite stereochemistry. The remaining oxidoreductase notD' (or notH') likely catalyzes the oxidative pyran ring formation to yield (-)-stephacidin A. The FAD-dependent monooxygenase notI' is highly similar to notB' and is predicted to catalyze a similar conversion from (-)-stephacidin A to (+)-notoamide B via the 2,3-epoxidation of (-)-stephacidin A followed by a pinacol-type rearrangement. Finally, it remains unclear which enzyme could be responsible for the final hydroxylation steps leading to notoamide A and sclerotiamide. The function of notO' in the notoamide biosynthesis has not been determined yet. This chain is Notoamide biosynthesis cluster protein O', found in Aspergillus versicolor.